Consider the following 212-residue polypeptide: ER lumen protein-retaining receptor (212 aa).

At 1–2 (MN) the chain is on the lumenal side. A helical membrane pass occupies residues 3-21 (IFRFAGDLSHVFAIIILLL). At 22-35 (KIWKTRSCAGISGK) the chain is on the cytoplasmic side. Residues 36–53 (SQILFAVVYLTRYLDLFT) traverse the membrane as a helical segment. Topologically, residues 54–61 (TYVSLYNS) are lumenal. The helical transmembrane segment at 62–80 (VMKVLFLATSGATVYLMYV) threads the bilayer. The Cytoplasmic segment spans residues 81 to 96 (KFKATYDHNHDSFRIE). Residues 97 to 110 (FLLVPCALLSLVIN) traverse the membrane as a helical segment. Residues 111–117 (HEFTVME) are Lumenal-facing. Residues 118–137 (VLWTFSIYLESVAILPQLFL) traverse the membrane as a helical segment. Residues 138–149 (VSRTGEAESITS) lie on the Cytoplasmic side of the membrane. The helical transmembrane segment at 150–168 (HYLFALGSYRALYLLNWVY) threads the bilayer. Residues 169–178 (RYMVESHYDL) are Lumenal-facing. A helical transmembrane segment spans residues 179-199 (IAIFAGVVQTVLYCDFFYLYI). The Cytoplasmic portion of the chain corresponds to 200 to 212 (TKVLKGKKLQLPA).

Belongs to the ERD2 family.

It localises to the endoplasmic reticulum membrane. Required for the retention of luminal endoplasmic reticulum proteins. Determines the specificity of the luminal ER protein retention system. Also required for normal vesicular traffic through the Golgi. The protein is ER lumen protein-retaining receptor (KdelR) of Drosophila melanogaster (Fruit fly).